Here is a 74-residue protein sequence, read N- to C-terminus: DUP240 protein DFP2 (74 aa).

The protein belongs to the DUP/COS family.

It is found in the cytoplasm. The protein resides in the membrane. The protein is DUP240 protein DFP2 of Saccharomyces cerevisiae (strain ATCC 204508 / S288c) (Baker's yeast).